A 1321-amino-acid polypeptide reads, in one-letter code: C-Jun-amino-terminal kinase-interacting protein 4 (1321 aa).

Met1 carries the N-acetylmethionine modification. Residues 7–95 enclose the RH1 domain; the sequence is VVYQEEPGGS…ITQYEREKAL (89 aa). Positions 66 to 166 form a coiled coil; sequence AQDQEHQVEL…NALHQRHTEM (101 aa). Phosphoserine is present on residues Ser109, Ser183, Ser185, Ser194, and Ser203. Residues 203–308 are disordered; sequence SLGIFPLPAG…EGFVKGTDTS (106 aa). A Phosphothreonine modification is found at Thr217. Residues 236 to 248 are compositionally biased toward polar residues; that stretch reads ELSQPRSHTSLKV. A phosphoserine mark is found at Ser238, Ser251, Ser265, Ser268, and Ser272. Positions 266–285 are enriched in polar residues; the sequence is DISQGGSKATTPASTANSDV. Thr292 is subject to Phosphothreonine. 4 positions are modified to phosphoserine: Ser311, Ser329, Ser332, and Ser347. Positions 322-332 are enriched in polar residues; the sequence is AQETRNVSTES. The disordered stretch occupies residues 322-341; sequence AQETRNVSTESGENEEKSEV. Thr348, Thr365, and Thr418 each carry phosphothreonine. Residues 408–534 adopt a coiled-coil conformation; it reads REVENLILEN…LQEAVRWTEM (127 aa). Residues 473–489 show a composition bias toward basic and acidic residues; sequence LRKARAEAEDARQKAKD. Disordered stretches follow at residues 473–500 and 563–600; these read LRKA…TAQR and SSNA…SQLP. Residues 500–604 form the RH2 domain; that stretch reads RKRFTRVEMA…TLSQLPGDKS (105 aa). A Phosphothreonine modification is found at Thr586. Ser588 is subject to Phosphoserine. Thr595 bears the Phosphothreonine mark. Ser705, Ser728, Ser730, Ser732, and Ser733 each carry phosphoserine. Residues 724 to 758 adopt a coiled-coil conformation; the sequence is SKQRSASQSSLDKLDQELKEQQKEFKNQEELSSQV. Residues 853–883 form a disordered region; sequence TGAATSPSTNGASPVIEKPPEMETENSEVDE. Polar residues predominate over residues 855–864; the sequence is AATSPSTNGA. Acidic residues predominate over residues 874–883; the sequence is METENSEVDE. Residue Ser1188 is modified to Phosphoserine. Residues 1239–1267 are disordered; that stretch reads PQSSSGGADLTADKAGSSAQEPSSQTPLK. Polar residues predominate over residues 1255 to 1266; sequence SSAQEPSSQTPL. Thr1264 bears the Phosphothreonine mark.

The protein belongs to the JIP scaffold family. In terms of assembly, homodimer. The homodimer interacts with ARF6, forming a heterotetramer. Homooligomer. Interacts with MAX, MAPK8, MAPK14, MAP3K3, MYC, and MAP2K4. Interacts with KNS2. Interaction with KNS2 is important in the formation of ternary complex with MAPK8. Interacts with PIP4P1. Interacts with PIKFYVE. Post-translationally, phosphorylated by MAPK8 and MAPK14. Highly expressed in brain, kidney, liver, heart.

The protein localises to the cytoplasm. It is found in the perinuclear region. Its subcellular location is the lysosome membrane. Its function is as follows. The JNK-interacting protein (JIP) group of scaffold proteins selectively mediates JNK signaling by aggregating specific components of the MAPK cascade to form a functional JNK signaling module. Regulates lysosomal positioning by acting as an adapter protein which links PIP4P1-positive lysosomes to the dynein-dynactin complex. Assists PIKFYVE selective functionality in microtubule-based endosome-to-TGN trafficking. This is C-Jun-amino-terminal kinase-interacting protein 4 from Mus musculus (Mouse).